We begin with the raw amino-acid sequence, 370 residues long: Calcium/calmodulin-dependent protein kinase type 1 (370 aa).

Residues 20–276 (YDFRDVLGTG…CEQALQHPWI (257 aa)) form the Protein kinase domain. ATP-binding positions include 26 to 34 (LGTGAFSEV) and lysine 49. A Glycyl lysine isopeptide (Lys-Gly) (interchain with G-Cter in ubiquitin) cross-link involves residue lysine 59. The active-site Proton acceptor is aspartate 141. Threonine 177 is subject to Phosphothreonine; by CaMKK1 and CaMKK2. An autoinhibitory domain region spans residues 276-316 (IAGDTALDKNIHQSVSEQIKKNFAKSKWKQAFNATAVVRHM). The calmodulin-binding stretch occupies residues 296–317 (KNFAKSKWKQAFNATAVVRHMR). Positions 315–321 (HMRKLQL) match the Nuclear export signal motif. Serine 363 is modified (phosphoserine).

This sequence belongs to the protein kinase superfamily. CAMK Ser/Thr protein kinase family. CaMK subfamily. In terms of assembly, monomer. Interacts with XPO1. Interacts with MARK2, ARHGEF7/BETAPIX and GIT1. Phosphorylated by CaMKK1 and CaMKK2 on Thr-177. Post-translationally, polybiquitinated by the E3 ubiquitin-protein ligase complex SCF(FBXL12), leading to proteasomal degradation. Widely expressed. Expressed in cells of the zona glomerulosa of the adrenal cortex.

Its subcellular location is the cytoplasm. It localises to the nucleus. The enzyme catalyses L-seryl-[protein] + ATP = O-phospho-L-seryl-[protein] + ADP + H(+). It catalyses the reaction L-threonyl-[protein] + ATP = O-phospho-L-threonyl-[protein] + ADP + H(+). Its activity is regulated as follows. Activated by Ca(2+)/calmodulin. Binding of calmodulin results in conformational change that relieves intrasteric autoinhibition and allows phosphorylation of Thr-177 within the activation loop by CaMKK1 or CaMKK2. Phosphorylation of Thr-177 results in several fold increase in total activity. Unlike CaMK4, is unable to exhibit autonomous activity after Ca(2+)/calmodulin activation. In terms of biological role, calcium/calmodulin-dependent protein kinase that operates in the calcium-triggered CaMKK-CaMK1 signaling cascade and, upon calcium influx, regulates transcription activators activity, cell cycle, hormone production, cell differentiation, actin filament organization and neurite outgrowth. Recognizes the substrate consensus sequence [MVLIF]-x-R-x(2)-[ST]-x(3)-[MVLIF]. Regulates axonal extension and growth cone motility in hippocampal and cerebellar nerve cells. Upon NMDA receptor-mediated Ca(2+) elevation, promotes dendritic growth in hippocampal neurons and is essential in synapses for full long-term potentiation (LTP) and ERK2-dependent translational activation. Downstream of NMDA receptors, promotes the formation of spines and synapses in hippocampal neurons by phosphorylating ARHGEF7/BETAPIX on 'Ser-694', which results in the enhancement of ARHGEF7 activity and activation of RAC1. Promotes neuronal differentiation and neurite outgrowth by activation and phosphorylation of MARK2 on 'Ser-91', 'Ser-92', 'Ser-93' and 'Ser-294'. Promotes nuclear export of HDAC5 and binding to 14-3-3 by phosphorylation of 'Ser-259' and 'Ser-498' in the regulation of muscle cell differentiation. Regulates NUMB-mediated endocytosis by phosphorylation of NUMB on 'Ser-276' and 'Ser-295'. Involved in the regulation of basal and estrogen-stimulated migration of medulloblastoma cells through ARHGEF7/BETAPIX phosphorylation. Is required for proper activation of cyclin-D1/CDK4 complex during G1 progression in diploid fibroblasts. Plays a role in K(+) and ANG2-mediated regulation of the aldosterone synthase (CYP11B2) to produce aldosterone in the adrenal cortex. Phosphorylates EIF4G3/eIF4GII. In vitro phosphorylates CREB1, ATF1, CFTR, MYL9 and SYN1/synapsin I. The chain is Calcium/calmodulin-dependent protein kinase type 1 (CAMK1) from Homo sapiens (Human).